Reading from the N-terminus, the 212-residue chain is Thymidylate kinase (212 aa).

11–18 (GPDGAGKS) contacts ATP.

This sequence belongs to the thymidylate kinase family.

The enzyme catalyses dTMP + ATP = dTDP + ADP. Its function is as follows. Phosphorylation of dTMP to form dTDP in both de novo and salvage pathways of dTTP synthesis. This is Thymidylate kinase from Streptococcus gordonii (strain Challis / ATCC 35105 / BCRC 15272 / CH1 / DL1 / V288).